Consider the following 118-residue polypeptide: REPTOR-binding partner (118 aa).

Over residues M1–Q20 the composition is skewed to polar residues. The disordered stretch occupies residues M1 to S53. Residues T36–S53 are compositionally biased toward basic and acidic residues. The segment at K40–K77 is basic motif. Residues K40–I90 enclose the bZIP domain. A leucine-zipper region spans residues L82–L89.

It belongs to the bZIP family. ATF subfamily. As to quaternary structure, homodimer. Interacts (via C-terminus) with REPTOR (via C-terminus).

The protein resides in the nucleus. It is found in the chromosome. Transcriptional regulator that acts in the TORC1 signaling pathway to regulate energy homeostasis and promote survival during nutrient deprivation. Interacts with REPTOR to form a transcriptional activator complex that functions downstream of TORC1 to up-regulate the expression of most target genes induced by TORC1 inhibition. In the complex, acts to enhance the binding of the transcriptional activator REPTOR to the regulatory sequences of target genes. Under normal conditions TORC1 is active, inhibiting the formation of the REPTOR/REPTOR-BP complex by phosphorylating REPTOR and mediates its cytoplasmic retention by forming a docking site for 14-3-3 proteins. Upon TORC1 inhibition resulting from nutrient stress, REPTOR is recruited into the nucleus where it interacts with REPTOR-BP and together they maintain organismal metabolism by activating the expression of target stress response genes including those involved in glycogenesis and triglyceride biosynthesis. The complex also appears to negatively regulate some aspects of TORC1-dependent larval growth. This chain is REPTOR-binding partner, found in Drosophila melanogaster (Fruit fly).